A 1058-amino-acid chain; its full sequence is Isoleucine--tRNA ligase (1058 aa).

The 'HIGH' region motif lies at 48–58; sequence PYTTGHIHLGT. The short motif at 596–600 is the 'KMSKS' region element; the sequence is KMSKS. Residue lysine 599 coordinates ATP.

It belongs to the class-I aminoacyl-tRNA synthetase family. IleS type 2 subfamily. As to quaternary structure, monomer. It depends on Zn(2+) as a cofactor.

The protein resides in the cytoplasm. It carries out the reaction tRNA(Ile) + L-isoleucine + ATP = L-isoleucyl-tRNA(Ile) + AMP + diphosphate. In terms of biological role, catalyzes the attachment of isoleucine to tRNA(Ile). As IleRS can inadvertently accommodate and process structurally similar amino acids such as valine, to avoid such errors it has two additional distinct tRNA(Ile)-dependent editing activities. One activity is designated as 'pretransfer' editing and involves the hydrolysis of activated Val-AMP. The other activity is designated 'posttransfer' editing and involves deacylation of mischarged Val-tRNA(Ile). The chain is Isoleucine--tRNA ligase from Methanosarcina barkeri (strain Fusaro / DSM 804).